The following is a 323-amino-acid chain: Beta-ketoacyl-[acyl-carrier-protein] synthase III (323 aa).

Active-site residues include Cys113 and His250. Residues Gln251–Arg255 are ACP-binding. The active site involves Asn280.

Belongs to the thiolase-like superfamily. FabH family. Homodimer.

Its subcellular location is the cytoplasm. It carries out the reaction malonyl-[ACP] + acetyl-CoA + H(+) = 3-oxobutanoyl-[ACP] + CO2 + CoA. It functions in the pathway lipid metabolism; fatty acid biosynthesis. Catalyzes the condensation reaction of fatty acid synthesis by the addition to an acyl acceptor of two carbons from malonyl-ACP. Catalyzes the first condensation reaction which initiates fatty acid synthesis and may therefore play a role in governing the total rate of fatty acid production. Possesses both acetoacetyl-ACP synthase and acetyl transacylase activities. Its substrate specificity determines the biosynthesis of branched-chain and/or straight-chain of fatty acids. This Rhizobium meliloti (strain 1021) (Ensifer meliloti) protein is Beta-ketoacyl-[acyl-carrier-protein] synthase III.